We begin with the raw amino-acid sequence, 233 residues long: Putative 26S proteasome non-ATPase regulatory subunit 8 homolog B (233 aa).

An N-acetylmethionine modification is found at Met-1. One can recognise a PCI domain in the interval 38 to 217 (DHYLISLSLN…APCKEIPSLQ (180 aa)).

It belongs to the proteasome subunit S14 family. In terms of assembly, component of the 19S regulatory particle (RP/PA700) lid subcomplex of the 26S proteasome. The 26S proteasome is composed of a core protease (CP), known as the 20S proteasome, capped at one or both ends by the 19S regulatory particle (RP/PA700). The RP/PA700 complex is composed of at least 17 different subunits in two subcomplexes, the base and the lid, which form the portions proximal and distal to the 20S proteolytic core, respectively. Interacts with UCH1 and UCH2.

Acts as a regulatory subunit of the 26S proteasome which is involved in the ATP-dependent degradation of ubiquitinated proteins. This Arabidopsis thaliana (Mouse-ear cress) protein is Putative 26S proteasome non-ATPase regulatory subunit 8 homolog B.